The primary structure comprises 113 residues: Large ribosomal subunit protein bL19 (113 aa).

It belongs to the bacterial ribosomal protein bL19 family.

In terms of biological role, this protein is located at the 30S-50S ribosomal subunit interface and may play a role in the structure and function of the aminoacyl-tRNA binding site. The sequence is that of Large ribosomal subunit protein bL19 from Natranaerobius thermophilus (strain ATCC BAA-1301 / DSM 18059 / JW/NM-WN-LF).